A 298-amino-acid polypeptide reads, in one-letter code: N-acetylmuramic acid 6-phosphate etherase (298 aa).

In terms of domain architecture, SIS spans 55-218 (IHAQVSGGGR…STGLMIKSGK (164 aa)). The Proton donor role is filled by E83. The active site involves E114.

Belongs to the GCKR-like family. MurNAc-6-P etherase subfamily. As to quaternary structure, homodimer.

The catalysed reaction is N-acetyl-D-muramate 6-phosphate + H2O = N-acetyl-D-glucosamine 6-phosphate + (R)-lactate. It participates in amino-sugar metabolism; 1,6-anhydro-N-acetylmuramate degradation. Its pathway is amino-sugar metabolism; N-acetylmuramate degradation. The protein operates within cell wall biogenesis; peptidoglycan recycling. In terms of biological role, specifically catalyzes the cleavage of the D-lactyl ether substituent of MurNAc 6-phosphate, producing GlcNAc 6-phosphate and D-lactate. Together with AnmK, is also required for the utilization of anhydro-N-acetylmuramic acid (anhMurNAc) either imported from the medium or derived from its own cell wall murein, and thus plays a role in cell wall recycling. This is N-acetylmuramic acid 6-phosphate etherase from Escherichia fergusonii (strain ATCC 35469 / DSM 13698 / CCUG 18766 / IAM 14443 / JCM 21226 / LMG 7866 / NBRC 102419 / NCTC 12128 / CDC 0568-73).